The chain runs to 179 residues: Translation initiation factor IF-3 (179 aa).

The protein belongs to the IF-3 family. As to quaternary structure, monomer.

The protein resides in the cytoplasm. IF-3 binds to the 30S ribosomal subunit and shifts the equilibrium between 70S ribosomes and their 50S and 30S subunits in favor of the free subunits, thus enhancing the availability of 30S subunits on which protein synthesis initiation begins. The chain is Translation initiation factor IF-3 from Buchnera aphidicola subsp. Schizaphis graminum (strain Sg).